A 259-amino-acid chain; its full sequence is Glutamate racemase (259 aa).

Residues Asp-12–Ser-13 and Tyr-44–Gly-45 contribute to the substrate site. Residue Cys-75 is the Proton donor/acceptor of the active site. Asn-76–Thr-77 is a substrate binding site. Residue Cys-186 is the Proton donor/acceptor of the active site. Residue Thr-187–His-188 coordinates substrate.

The protein belongs to the aspartate/glutamate racemases family.

The catalysed reaction is L-glutamate = D-glutamate. It functions in the pathway cell wall biogenesis; peptidoglycan biosynthesis. In terms of biological role, provides the (R)-glutamate required for cell wall biosynthesis. The sequence is that of Glutamate racemase from Clostridium novyi (strain NT).